The primary structure comprises 1116 residues: Ubiquitin C-terminal hydrolase 12 (1116 aa).

Over residues 1–10 (MTMMTPPPVD) the composition is skewed to pro residues. Residues 1–52 (MTMMTPPPVDQPEDEEMLVPNSDLVDGPAQPMEVTQPETAASTVENQPAEDP) are disordered. The span at 36 to 46 (QPETAASTVEN) shows a compositional bias: polar residues. The 126-residue stretch at 54–179 (TLKFTWTIPN…NDTVLVEAEV (126 aa)) folds into the MATH domain. The 326-residue stretch at 199-524 (VGLKNQGATC…NAYMLVYIRE (326 aa)) folds into the USP domain. C208 acts as the Nucleophile in catalysis. H455 acts as the Proton acceptor in catalysis.

This sequence belongs to the peptidase C19 family. In terms of assembly, interacts with SIC/RON3.

The enzyme catalyses Thiol-dependent hydrolysis of ester, thioester, amide, peptide and isopeptide bonds formed by the C-terminal Gly of ubiquitin (a 76-residue protein attached to proteins as an intracellular targeting signal).. Recognizes and hydrolyzes the peptide bond at the C-terminal Gly of ubiquitin. Involved in the processing of poly-ubiquitin precursors as well as that of ubiquitinated proteins. Positive regulator of root meristem development that, together with UBP13, prevents the ubiquitination and turnover of RGFR1 induced by the RGF1 hormone peptide, thus influencing PLT1 and PLT2 expression. This chain is Ubiquitin C-terminal hydrolase 12, found in Arabidopsis thaliana (Mouse-ear cress).